The chain runs to 267 residues: Apolipoprotein A-I (267 aa).

Positions 1–18 are cleaved as a signal peptide; that stretch reads MKAAVLTLAVLFLTGSQA. A run of 2 repeats spans residues 68 to 89 and 90 to 111. Positions 68–267 are 10 X approximate tandem repeats; that stretch reads LKLLDNWDSV…EEYTKKLNTQ (200 aa). The residue at position 110 (methionine 110) is a Methionine sulfoxide. One copy of the 3; half-length repeat lies at 112 to 122; it reads KDLEEVKAKVQ. Repeat copies occupy residues 123-144, 145-166, 167-188, 189-210, and 211-232. A Methionine sulfoxide modification is found at methionine 136. The 9; half-length repeat unit spans residues 233–243; it reads PALEDLRQGLL. Copy 10 of the repeat occupies 244-267; it reads PVLESFKVSFLSALEEYTKKLNTQ.

It belongs to the apolipoprotein A1/A4/E family. As to quaternary structure, homodimer. Interacts with APOA1BP and CLU. Component of a sperm activating protein complex (SPAP), consisting of APOA1, an immunoglobulin heavy chain, an immunoglobulin light chain and albumin. Interacts with NDRG1. Interacts with SCGB3A2. Interacts with NAXE and YJEFN3. In terms of processing, glycosylated. Palmitoylated. Post-translationally, phosphorylation sites are present in the extracellular medium. Major protein of plasma HDL, also found in chylomicrons.

The protein localises to the secreted. Its function is as follows. Participates in the reverse transport of cholesterol from tissues to the liver for excretion by promoting cholesterol efflux from tissues and by acting as a cofactor for the lecithin cholesterol acyltransferase (LCAT). As part of the SPAP complex, activates spermatozoa motility. This chain is Apolipoprotein A-I (APOA1), found in Pan troglodytes (Chimpanzee).